Reading from the N-terminus, the 331-residue chain is UDP-GalNAc:beta-1,3-N-acetylgalactosaminyltransferase 1 (331 aa).

Topologically, residues 1-20 are cytoplasmic; it reads MASALWTVLPSRMSLRSLQW. Residues 21–43 traverse the membrane as a helical; Signal-anchor for type II membrane protein segment; the sequence is SLLLLSLLSFLVMWYLSLPHYNV. The Lumenal segment spans residues 44-331; that stretch reads IERVNWMYFY…VMLRNTTCHY (288 aa). 5 N-linked (GlcNAc...) asparagine glycosylation sites follow: N72, N154, N198, N212, and N326.

It belongs to the glycosyltransferase 31 family. Requires Mg(2+) as cofactor.

The protein resides in the golgi apparatus membrane. The catalysed reaction is a globoside Gb3Cer (d18:1(4E)) + UDP-N-acetyl-alpha-D-galactosamine = a globoside Gb4Cer (d18:1(4E)) + UDP + H(+). The protein operates within protein modification; protein glycosylation. In terms of biological role, transfers N-acetylgalactosamine onto globotriaosylceramide. Plays a critical role in preimplantation stage embryonic development. The sequence is that of UDP-GalNAc:beta-1,3-N-acetylgalactosaminyltransferase 1 (B3GALNT1) from Pongo abelii (Sumatran orangutan).